Here is a 366-residue protein sequence, read N- to C-terminus: 2-aminoethylphosphonate--pyruvate transaminase (366 aa).

An N6-(pyridoxal phosphate)lysine modification is found at lysine 192.

The protein belongs to the class-V pyridoxal-phosphate-dependent aminotransferase family. PhnW subfamily. As to quaternary structure, homodimer. The cofactor is pyridoxal 5'-phosphate.

It catalyses the reaction (2-aminoethyl)phosphonate + pyruvate = phosphonoacetaldehyde + L-alanine. Its function is as follows. Involved in phosphonate degradation. This is 2-aminoethylphosphonate--pyruvate transaminase (phnW) from Lysinibacillus sphaericus (strain C3-41).